The chain runs to 119 residues: Large ribosomal subunit protein uL18 (119 aa).

The tract at residues 1–20 (MSQIDKASRRQKIKDRSRVK) is disordered. Residues 9-20 (RRQKIKDRSRVK) show a composition bias toward basic residues.

This sequence belongs to the universal ribosomal protein uL18 family. As to quaternary structure, part of the 50S ribosomal subunit; part of the 5S rRNA/L5/L18/L25 subcomplex. Contacts the 5S and 23S rRNAs.

Its function is as follows. This is one of the proteins that bind and probably mediate the attachment of the 5S RNA into the large ribosomal subunit, where it forms part of the central protuberance. This is Large ribosomal subunit protein uL18 from Chlorobium phaeobacteroides (strain DSM 266 / SMG 266 / 2430).